The primary structure comprises 1391 residues: DNA-directed RNA polymerase subunit beta' (1391 aa).

Residues C70, C72, C85, and C88 each coordinate Zn(2+). Mg(2+) contacts are provided by D461, D463, and D465. 4 residues coordinate Zn(2+): C809, C882, C889, and C892.

Belongs to the RNA polymerase beta' chain family. In terms of assembly, the RNAP catalytic core consists of 2 alpha, 1 beta, 1 beta' and 1 omega subunit. When a sigma factor is associated with the core the holoenzyme is formed, which can initiate transcription. It depends on Mg(2+) as a cofactor. Zn(2+) is required as a cofactor.

The enzyme catalyses RNA(n) + a ribonucleoside 5'-triphosphate = RNA(n+1) + diphosphate. In terms of biological role, DNA-dependent RNA polymerase catalyzes the transcription of DNA into RNA using the four ribonucleoside triphosphates as substrates. This Zymomonas mobilis subsp. mobilis (strain ATCC 31821 / ZM4 / CP4) protein is DNA-directed RNA polymerase subunit beta'.